Here is a 156-residue protein sequence, read N- to C-terminus: 3-hydroxyacyl-[acyl-carrier-protein] dehydratase FabZ (156 aa).

Residue His50 is part of the active site.

This sequence belongs to the thioester dehydratase family. FabZ subfamily.

It localises to the cytoplasm. It carries out the reaction a (3R)-hydroxyacyl-[ACP] = a (2E)-enoyl-[ACP] + H2O. In terms of biological role, involved in unsaturated fatty acids biosynthesis. Catalyzes the dehydration of short chain beta-hydroxyacyl-ACPs and long chain saturated and unsaturated beta-hydroxyacyl-ACPs. In Janthinobacterium sp. (strain Marseille) (Minibacterium massiliensis), this protein is 3-hydroxyacyl-[acyl-carrier-protein] dehydratase FabZ.